A 561-amino-acid polypeptide reads, in one-letter code: NADH-quinone oxidoreductase subunit C/D (561 aa).

Positions 1–152 are NADH dehydrogenase I subunit C; that stretch reads MLEKFSSKFN…YQVLYESDDL (152 aa). The NADH dehydrogenase I subunit D stretch occupies residues 176-561; the sequence is KYTFLNIGPS…LNIIAGELDR (386 aa).

In the N-terminal section; belongs to the complex I 30 kDa subunit family. This sequence in the C-terminal section; belongs to the complex I 49 kDa subunit family. In terms of assembly, NDH-1 is composed of 13 different subunits. Subunits NuoB, CD, E, F, and G constitute the peripheral sector of the complex.

It localises to the cell inner membrane. The catalysed reaction is a quinone + NADH + 5 H(+)(in) = a quinol + NAD(+) + 4 H(+)(out). Functionally, NDH-1 shuttles electrons from NADH, via FMN and iron-sulfur (Fe-S) centers, to quinones in the respiratory chain. The immediate electron acceptor for the enzyme in this species is believed to be ubiquinone. Couples the redox reaction to proton translocation (for every two electrons transferred, four hydrogen ions are translocated across the cytoplasmic membrane), and thus conserves the redox energy in a proton gradient. The protein is NADH-quinone oxidoreductase subunit C/D of Campylobacter fetus subsp. fetus (strain 82-40).